The sequence spans 392 residues: UDP-N-acetylglucosamine--N-acetylmuramyl-(pentapeptide) pyrophosphoryl-undecaprenol N-acetylglucosamine transferase (392 aa).

Residues 14–16 (TGG), N124, R167, S195, I251, and Q296 each bind UDP-N-acetyl-alpha-D-glucosamine.

It belongs to the glycosyltransferase 28 family. MurG subfamily.

The protein localises to the cell inner membrane. It catalyses the reaction di-trans,octa-cis-undecaprenyl diphospho-N-acetyl-alpha-D-muramoyl-L-alanyl-D-glutamyl-meso-2,6-diaminopimeloyl-D-alanyl-D-alanine + UDP-N-acetyl-alpha-D-glucosamine = di-trans,octa-cis-undecaprenyl diphospho-[N-acetyl-alpha-D-glucosaminyl-(1-&gt;4)]-N-acetyl-alpha-D-muramoyl-L-alanyl-D-glutamyl-meso-2,6-diaminopimeloyl-D-alanyl-D-alanine + UDP + H(+). It participates in cell wall biogenesis; peptidoglycan biosynthesis. In terms of biological role, cell wall formation. Catalyzes the transfer of a GlcNAc subunit on undecaprenyl-pyrophosphoryl-MurNAc-pentapeptide (lipid intermediate I) to form undecaprenyl-pyrophosphoryl-MurNAc-(pentapeptide)GlcNAc (lipid intermediate II). This is UDP-N-acetylglucosamine--N-acetylmuramyl-(pentapeptide) pyrophosphoryl-undecaprenol N-acetylglucosamine transferase from Sphingopyxis alaskensis (strain DSM 13593 / LMG 18877 / RB2256) (Sphingomonas alaskensis).